We begin with the raw amino-acid sequence, 619 residues long: Calnexin (619 aa).

The first 21 residues, 1 to 21, serve as a signal peptide directing secretion; sequence MVNRKWMYIFIQFLLVSSIRS. Position 109 (aspartate 109) interacts with Ca(2+). Cysteine 152 and cysteine 186 are oxidised to a cystine. An alpha-D-glucoside is bound by residues tyrosine 156, lysine 158, tyrosine 177, and aspartate 184. Asparagine 203 carries N-linked (GlcNAc...) asparagine glycosylation. Positions 268 to 401 are p domain (Extended arm); that stretch reads IFDETDLKPV…RLIDNPNYFE (134 aa). A run of 5 repeats spans residues 270 to 282, 287 to 299, 306 to 318, 325 to 337, and 340 to 350. 4 X approximate repeats regions lie at residues 270 to 337 and 340 to 397; these read DETD…WDED and GSWE…IDNP. The cysteines at positions 352 and 358 are disulfide-linked. 3 consecutive repeat copies span residues 359 to 369, 373 to 383, and 387 to 397. An an alpha-D-glucoside-binding site is contributed by glutamate 417. Ca(2+) is bound at residue aspartate 428. Residues 481 to 501 traverse the membrane as a helical segment; it reads LWAVYILCVLLPLVAIGVFCF. Residues 538 to 619 form a disordered region; sequence GDEEDDVNQP…AKRRTARRGD (82 aa). Over residues 547-557 the composition is skewed to polar residues; it reads PGPSGSQSNPE. A compositionally biased stretch (low complexity) spans 566–577; it reads EQQSANSSQSSA. Residue asparagine 571 is glycosylated (N-linked (GlcNAc...) asparagine). Residues 585–601 are compositionally biased toward basic and acidic residues; that stretch reads HVVPENEPVKPTEEFAK. A compositionally biased stretch (basic residues) spans 610–619; the sequence is AKRRTARRGD.

It belongs to the calreticulin family. In terms of processing, glycosylation is important for its biological activity. In terms of tissue distribution, expressed ubiquitously in every blastomere of the embryo up to the gastrulation stage. Expression becomes gradually restricted to the head and tail regions at the comma stage during embryogenesis. During postembryonic development, expressed prominently in the H-shaped excretory cell, in the neurons of head (including ASK and ADL) and tail (including PHA and PHB), in the dorsal and ventral nerve cords, and in the spermatheca. Expressed in the spicules of the male tail (at protein level).

The protein localises to the endoplasmic reticulum membrane. It localises to the cytoplasm. The protein resides in the perinuclear region. Its subcellular location is the cytoplasmic vesicle. Its function is as follows. Calcium-binding protein that interacts with newly synthesized monoglucosylated glycoproteins in the endoplasmic reticulum. It may act in assisting protein assembly and/or in the retention within the ER of unassembled protein subunits. It seems to play a major role in the quality control apparatus of the ER by the retention of incorrectly folded proteins. Required for embryogenesis and larval development under heat and ER stress conditions. May be important for germ cell development. Involved in neuronal necrotic cell death. This is Calnexin (cnx-1) from Caenorhabditis elegans.